We begin with the raw amino-acid sequence, 196 residues long: Zinc finger C2H2 protein ECU03_0940 (196 aa).

2 C2H2-type zinc fingers span residues 130–155 (YACE…KEGH) and 166–191 (YVCP…KHYH).

The sequence is that of Zinc finger C2H2 protein ECU03_0940 from Encephalitozoon cuniculi (strain GB-M1) (Microsporidian parasite).